The chain runs to 426 residues: Glutamate-1-semialdehyde 2,1-aminomutase (426 aa).

Lysine 265 is modified (N6-(pyridoxal phosphate)lysine).

This sequence belongs to the class-III pyridoxal-phosphate-dependent aminotransferase family. HemL subfamily. In terms of assembly, homodimer. Pyridoxal 5'-phosphate is required as a cofactor.

The protein localises to the cytoplasm. It carries out the reaction (S)-4-amino-5-oxopentanoate = 5-aminolevulinate. The protein operates within porphyrin-containing compound metabolism; protoporphyrin-IX biosynthesis; 5-aminolevulinate from L-glutamyl-tRNA(Glu): step 2/2. The sequence is that of Glutamate-1-semialdehyde 2,1-aminomutase from Shigella boydii serotype 4 (strain Sb227).